The sequence spans 250 residues: Protein orai-2 (250 aa).

Transmembrane regions (helical) follow at residues 66-83, 94-114, 148-168, and 192-212; these read TSAL…EVQL, LIAF…ALLI, LAWG…VVLL, and AALV…VFTI.

It belongs to the Orai family. As to quaternary structure, oligomerizes in homomeric and heteromeric ORAI complexes. Native CRAC channels most likely consist of hexameric ORAI heteromers, implying that diverse ORAI1, ORAI2 and ORAI3 subunit combinations with distinct biophysical properties can operate in a cell-type specific way. Interacts with STIM1; this regulates channel activity. Interacts with CRACR2A/EFCAB4B.

It is found in the cell membrane. The enzyme catalyses Ca(2+)(in) = Ca(2+)(out). Its activity is regulated as follows. CRAC channels are regulated by fast Ca(2+)-dependent inactivation (FCDI), a mechanism that limits Ca(2+) influx and cell toxicity. ORAI2 channels display prominent FCDI. Inhibited by lanthanides such as Gd(3+) ions. Its function is as follows. Pore-forming subunit of inward rectifying Ca(2+) release-activated Ca(2+) (CRAC) channels. Assembles with ORAI1 and ORAI3 to form hexameric CRAC channels that mediate Ca(2+) influx upon depletion of endoplasmic reticulum Ca(2+) store and channel activation by Ca(2+) sensor STIM1, a process known as store-operated Ca(2+) entry (SOCE). Various pore subunit combinations may account for distinct CRAC channel spatiotemporal and cell-type specific dynamics. ORAI1 mainly contributes to the generation of Ca(2+) plateaus involved in sustained Ca(2+) entry and is dispensable for cytosolic Ca(2+) oscillations, whereas ORAI2 and ORAI3 generate oscillatory patterns. CRAC channels assemble in Ca(2+) signaling microdomains where Ca(2+) influx is coupled to calmodulin and calcineurin signaling and activation of NFAT transcription factors recruited to ORAI1 via AKAP5. CRAC channels are the main pathway for Ca(2+) influx in T cells and promote the immune response to pathogens by activating NFAT-dependent cytokine and chemokine transcription. This Mus musculus (Mouse) protein is Protein orai-2 (Orai2).